The sequence spans 245 residues: 1-(5-phosphoribosyl)-5-[(5-phosphoribosylamino)methylideneamino] imidazole-4-carboxamide isomerase (245 aa).

The active-site Proton acceptor is Asp-8. Asp-130 serves as the catalytic Proton donor.

This sequence belongs to the HisA/HisF family.

It localises to the cytoplasm. It carries out the reaction 1-(5-phospho-beta-D-ribosyl)-5-[(5-phospho-beta-D-ribosylamino)methylideneamino]imidazole-4-carboxamide = 5-[(5-phospho-1-deoxy-D-ribulos-1-ylimino)methylamino]-1-(5-phospho-beta-D-ribosyl)imidazole-4-carboxamide. It participates in amino-acid biosynthesis; L-histidine biosynthesis; L-histidine from 5-phospho-alpha-D-ribose 1-diphosphate: step 4/9. The protein is 1-(5-phosphoribosyl)-5-[(5-phosphoribosylamino)methylideneamino] imidazole-4-carboxamide isomerase of Pseudomonas syringae pv. tomato (strain ATCC BAA-871 / DC3000).